The primary structure comprises 224 residues: Germin-like protein 8-8 (224 aa).

The first 22 residues, 1 to 22 (MASPSFCLLAALLALVSWQAIA), serve as a signal peptide directing secretion. The cysteines at positions 32 and 47 are disulfide-linked. The Cupin type-1 domain occupies 62–212 (AMLDTPRKTN…AFQVEKGTID (151 aa)). Asn76 carries N-linked (GlcNAc...) asparagine glycosylation. 3 residues coordinate Mn(2+): His109, His111, and Glu116. Asn135 is a glycosylation site (N-linked (GlcNAc...) asparagine). His157 lines the Mn(2+) pocket.

It belongs to the germin family. Oligomer (believed to be a pentamer but probably hexamer).

It is found in the secreted. It localises to the extracellular space. The protein resides in the apoplast. Its function is as follows. Plays a role in broad-spectrum disease resistance. Probably has no oxalate oxidase activity even if the active site is conserved. The sequence is that of Germin-like protein 8-8 from Oryza sativa subsp. japonica (Rice).